The sequence spans 844 residues: Rho guanine nucleotide exchange factor 33 (844 aa).

Composition is skewed to basic and acidic residues over residues 1-13 (MEKTKTKQGENEH) and 101-113 (QQKIEQLQQEKRR). 3 disordered regions span residues 1–20 (MEKTKTKQGENEHMPVNNPS), 101–142 (QQKI…GSPF), and 169–189 (AQESRSVHVGDSNVKGMMGPG). Positions 54-129 (LEEKVKSCRC…AKKTQKEEHS (76 aa)) form a coiled coil. Residues 130–142 (SQAGPAQAQGSPF) are compositionally biased toward polar residues. The DH domain occupies 265-440 (KRQTVALELL…RVFISHYTLL (176 aa)). Disordered stretches follow at residues 498 to 541 (LQPY…DWEL), 668 to 687 (RPEHPLQPLPKSATSPAGSS), and 702 to 745 (AKPL…RAAQ). Arginine 757 is modified (omega-N-methylarginine). Over residues 787 to 800 (DTTRFCPKEERESE) the composition is skewed to basic and acidic residues. The tract at residues 787 to 844 (DTTRFCPKEERESEQTSFSDQNPRQDQKGGFRSSFRKLFKKKNGNATGEDFCGPWGWW) is disordered. A compositionally biased stretch (basic residues) spans 820-829 (SFRKLFKKKN).

In terms of biological role, may act as a guanine-nucleotide releasing factor. In Homo sapiens (Human), this protein is Rho guanine nucleotide exchange factor 33 (ARHGEF33).